The following is a 1249-amino-acid chain: Cell adhesion molecule-related/down-regulated by oncogenes (1249 aa).

Residues Met-1–Ser-25 form the signal peptide. The Extracellular segment spans residues Asp-26–Asp-957. Ig-like C2-type domains are found at residues Pro-29 to Ser-113, Asn-120 to Ser-212, Pro-217 to Thr-307, Pro-314 to His-400, and Pro-406 to Thr-517. Disulfide bonds link Cys-50-Cys-98, Cys-142-Cys-192, and Cys-244-Cys-292. 5 N-linked (GlcNAc...) asparagine glycosylation sites follow: Asn-181, Asn-289, Asn-296, Asn-344, and Asn-428. Disulfide bonds link Cys-335-Cys-382 and Cys-427-Cys-501. 2 disordered regions span residues Glu-528–Gln-585 and Thr-671–Gly-690. Positions Ser-545–Glu-566 are enriched in basic and acidic residues. Fibronectin type-III domains lie at Ala-577–Arg-675, Ala-721–Tyr-815, and Gly-826–Arg-923. N-linked (GlcNAc...) asparagine glycosylation is present at Asn-870. Residues Ser-929 to Pro-952 are disordered. Residues Ser-937–Pro-952 are compositionally biased toward low complexity. The chain crosses the membrane as a helical span at residues Phe-958 to Ile-978. Residues Ala-979–Ala-1249 are Cytoplasmic-facing. A disordered region spans residues Asn-1158–Asp-1202. The span at Cys-1159–Asn-1168 shows a compositional bias: acidic residues. Residues Gln-1173 to Thr-1189 show a composition bias toward polar residues. Residues Glu-1190–Asp-1202 show a composition bias toward basic and acidic residues.

It localises to the cell membrane. Functionally, component of a cell-surface receptor complex that mediates cell-cell interactions between muscle precursor cells. Promotes differentiation of myogenic cells. This is Cell adhesion molecule-related/down-regulated by oncogenes (cdon) from Xenopus laevis (African clawed frog).